A 927-amino-acid chain; its full sequence is Ribosome-releasing factor 2, mitochondrial (927 aa).

The transit peptide at 1–57 (MVTAPLLGWVAVRPIPRLSKLNTCKYVSSSLQSYKRSVGSCLGKQQSRDFSYSATLT) directs the protein to the mitochondrion. The region spanning 64 to 379 (EKTRNIGIIA…AVNNLLPGPS (316 aa)) is the tr-type G domain. Residues 73–80 (AHIDAGKT), 163–167 (DTPGH), and 217–220 (NKLD) contribute to the GTP site.

The protein belongs to the TRAFAC class translation factor GTPase superfamily. Classic translation factor GTPase family. EF-G/EF-2 subfamily.

The protein resides in the mitochondrion. Mitochondrial GTPase that mediates the disassembly of ribosomes from messenger RNA at the termination of mitochondrial protein biosynthesis. Not involved in the GTP-dependent ribosomal translocation step during translation elongation. The protein is Ribosome-releasing factor 2, mitochondrial (mef2) of Talaromyces marneffei (strain ATCC 18224 / CBS 334.59 / QM 7333) (Penicillium marneffei).